The chain runs to 86 residues: Small ribosomal subunit protein bS16 (86 aa).

Belongs to the bacterial ribosomal protein bS16 family.

The chain is Small ribosomal subunit protein bS16 from Bordetella bronchiseptica (strain ATCC BAA-588 / NCTC 13252 / RB50) (Alcaligenes bronchisepticus).